The following is a 1887-amino-acid chain: Protein TIC 214 (1887 aa).

6 helical membrane passes run 18–38 (IINS…FSIG), 64–84 (FITG…HLAL), 87–107 (PHTI…WNNH), 124–144 (LSIQ…HFIL), 172–192 (VGWL…LVWI), and 221–241 (IFSI…PSPI). Disordered regions lie at residues 248 to 300 (EASK…EGWD), 786 to 805 (EEQT…DNKR), and 1569 to 1603 (LPSN…NLSP). Residues 256–268 (VESEEERDVEIET) are compositionally biased toward acidic residues. Residues 775–816 (KEREFKILESREEQTKREEKKEKDKKEDNKRKEQARIAIEEA) adopt a coiled-coil conformation. Basic and acidic residues predominate over residues 1578 to 1597 (RSQETKEPPSQRERGSDIEN).

Belongs to the TIC214 family. As to quaternary structure, part of the Tic complex.

The protein localises to the plastid. It is found in the chloroplast inner membrane. Its function is as follows. Involved in protein precursor import into chloroplasts. May be part of an intermediate translocation complex acting as a protein-conducting channel at the inner envelope. This Solanum bulbocastanum (Wild potato) protein is Protein TIC 214.